Here is a 285-residue protein sequence, read N- to C-terminus: Seed agglutinin 2 (285 aa).

Residues 1-31 (MASYKFKTQNSFLLLLSISFFFLLLLNKVNS) form the signal peptide. Asn-147 carries N-linked (GlcNAc...) asparagine glycosylation. Residues Glu-156 and Asp-158 each contribute to the Mn(2+) site. Ca(2+) contacts are provided by Asp-158, Asn-162, and Asp-166. Positions 166 and 171 each coordinate Mn(2+).

It belongs to the leguminous lectin family. Homotetramer. Mostly found in non-glycosylated form. In terms of tissue distribution, expressed in seed.

Seed lectin. The polypeptide is Seed agglutinin 2 (Robinia pseudoacacia (Black locust)).